A 463-amino-acid polypeptide reads, in one-letter code: Succinate--CoA ligase [ADP-forming] subunit beta, mitochondrial (463 aa).

The N-terminal 52 residues, 1–52 (MAASMFYGRLVAVATLRNHRPRTAQRAAAQVLGSSGLFNNHGLQVQQQQQRN), are a transit peptide targeting the mitochondrion. Residues 61–288 (MELLQEAGVS…SNSAYRQKKI (228 aa)) form the ATP-grasp domain. Lys-78 carries the post-translational modification N6-acetyllysine. A Phosphotyrosine modification is found at Tyr-84. At Lys-88 the chain carries N6-acetyllysine; alternate. An N6-succinyllysine; alternate modification is found at Lys-88. ATP-binding positions include Lys-98 and 105–107 (GRG). An N6-acetyllysine mark is found at Lys-129, Lys-139, Lys-143, and Lys-216. 2 residues coordinate Mg(2+): Asn-258 and Asp-272. Ser-279 bears the Phosphoserine mark. Asn-323 serves as a coordination point for substrate. Thr-341 carries the phosphothreonine modification. N6-acetyllysine is present on Lys-368. 380-382 (GIM) lines the substrate pocket.

The protein belongs to the succinate/malate CoA ligase beta subunit family. ATP-specific subunit beta subfamily. In terms of assembly, heterodimer of an alpha and a beta subunit. The beta subunit determines specificity for ATP. Interacts with ALAS2. Requires Mg(2+) as cofactor. As to expression, widely expressed. Not expressed in liver and lung.

The protein localises to the mitochondrion. The enzyme catalyses succinate + ATP + CoA = succinyl-CoA + ADP + phosphate. It functions in the pathway carbohydrate metabolism; tricarboxylic acid cycle; succinate from succinyl-CoA (ligase route): step 1/1. Its activity is regulated as follows. Inhibited by itaconate. Functionally, ATP-specific succinyl-CoA synthetase functions in the citric acid cycle (TCA), coupling the hydrolysis of succinyl-CoA to the synthesis of ATP and thus represents the only step of substrate-level phosphorylation in the TCA. The beta subunit provides nucleotide specificity of the enzyme and binds the substrate succinate, while the binding sites for coenzyme A and phosphate are found in the alpha subunit. The sequence is that of Succinate--CoA ligase [ADP-forming] subunit beta, mitochondrial from Homo sapiens (Human).